Reading from the N-terminus, the 152-residue chain is Transcriptional regulator MraZ (152 aa).

SpoVT-AbrB domains follow at residues 7–51 (KERH…APDR) and 89–132 (LEMV…DPQR).

It belongs to the MraZ family. As to quaternary structure, forms oligomers.

It is found in the cytoplasm. It localises to the nucleoid. This is Transcriptional regulator MraZ from Pelodictyon phaeoclathratiforme (strain DSM 5477 / BU-1).